A 374-amino-acid chain; its full sequence is uncharacterized protein (374 aa).

Residues 1-21 (MSIISRVCIPCAVLLFAQLHA) form the signal peptide. A Fibronectin type-III domain is found at 22–102 (KELVHVSQLK…ASASAWTSLS (81 aa)).

This is an uncharacterized protein from Treponema pallidum (strain Nichols).